A 470-amino-acid chain; its full sequence is 5-hydroxytryptamine receptor 2A (470 aa).

Residues 1 to 23 are disordered; that stretch reads MDVLFEDNAPLSPTTSSLMPSNG. Residues 1–80 are Extracellular-facing; sequence MDVLFEDNAP…LQEKNWSALL (80 aa). Positions 10–21 are enriched in low complexity; sequence PLSPTTSSLMPS. 4 N-linked (GlcNAc...) asparagine glycosylation sites follow: Asn38, Asn44, Asn51, and Asn54. A helical membrane pass occupies residues 81–97; sequence TAVVIILTIAGNILVIM. Residues 98–111 are Cytoplasmic-facing; that stretch reads AVSLEKKLQNATNY. A helical membrane pass occupies residues 112-137; that stretch reads FLMSLAIADMLLGFLVMPVSMLTILY. At 138–146 the chain is on the extracellular side; sequence GYRWPLPSK. The chain crosses the membrane as a helical span at residues 147 to 171; that stretch reads LCAVWIYLDVLFSTASIMHLCAISL. Cys148 and Cys227 are oxidised to a cystine. Asp155 provides a ligand contact to serotonin. The short motif at 172–174 is the DRY motif; important for ligand-induced conformation changes element; the sequence is DRY. The Cytoplasmic segment spans residues 172–191; it reads DRYVAIQNPIHHSRFNSRTK. Residues 192–215 form a helical membrane-spanning segment; sequence AFLKIIAVWTISVGISMPIPVFGL. The Extracellular portion of the chain corresponds to 216-232; it reads QDDSKVFKEGSCLLADD. A helical transmembrane segment spans residues 233 to 258; the sequence is NFVLIGSFVSFFIPLTIMVITYFLTI. Residues 259 to 321 are Cytoplasmic-facing; that stretch reads KSLQKEATLC…QSISNEQKAC (63 aa). Ser280 is modified (phosphoserine). Residues 322 to 347 traverse the membrane as a helical segment; that stretch reads KVLGIVFFLFVVMWCPFFITNIMAVI. Asn342 contacts serotonin. A disulfide bridge connects residues Cys348 and Cys352. Topologically, residues 348–355 are extracellular; sequence CKESCNED. Residues 356 to 381 traverse the membrane as a helical segment; that stretch reads IIGALLNVFVWIGYLSSAVNPLVYTL. Positions 375–379 match the NPxxY motif; important for ligand-induced conformation changes and signaling motif; sequence NPLVY. At 382–470 the chain is on the cytoplasmic side; sequence FNKTYRSAFS…NTVNEKVSCV (89 aa). Residues 468 to 470 carry the PDZ-binding motif; sequence SCV.

The protein belongs to the G-protein coupled receptor 1 family. Interacts (via C-terminus) with MPDZ and PATJ. May interact (via C-terminus) with MPP3, PRDX6, DLG4, DLG1, CASK, APBA1 and MAGI2. Interacts with GRM2 and DRD2; this may affect signaling. As to expression, ubiquitous.

Its subcellular location is the cell membrane. It is found in the cell projection. It localises to the dendrite. The protein localises to the axon. The protein resides in the cytoplasmic vesicle. Its subcellular location is the membrane. It is found in the caveola. It localises to the presynapse. With respect to regulation, G-protein coupled receptor activity is regulated by lipids: oleamide increases HTR2A-mediated activity. G-protein coupled receptor for 5-hydroxytryptamine (serotonin). Also functions as a receptor for various drugs and psychoactive substances, including mescaline, psilocybin, 1-(2,5-dimethoxy-4-iodophenyl)-2-aminopropane (DOI) and lysergic acid diethylamide (LSD). Ligand binding causes a conformation change that triggers signaling via guanine nucleotide-binding proteins (G proteins) and modulates the activity of downstream effectors. HTR2A is coupled to G(q)/G(11) G alpha proteins and activates phospholipase C-beta, releasing diacylglycerol (DAG) and inositol 1,4,5-trisphosphate (IP3) second messengers that modulate the activity of phosphatidylinositol 3-kinase and promote the release of Ca(2+) ions from intracellular stores, respectively. Beta-arrestin family members inhibit signaling via G proteins and mediate activation of alternative signaling pathways. Affects neural activity, perception, cognition and mood. Plays a role in the regulation of behavior, including responses to anxiogenic situations and psychoactive substances. Plays a role in intestinal smooth muscle contraction, and may play a role in arterial vasoconstriction. This Canis lupus familiaris (Dog) protein is 5-hydroxytryptamine receptor 2A (HTR2A).